The sequence spans 250 residues: MAVTKLVLVRHGESQWNKENRFTGWYDVDLSEKGISEAKAAGKLLKEEGFSFDFAYTSVLKRAIHTLWNVLDELDQAWLPVEKSWKLNERHYGALQGLNKAETAEKYGDEQVKQWRRGFAVTPPELTKDDERYPGHDPRYAKLSEKELPLTESLALTIDRVIPYWNDTILPRMKSGERVIIAAHGNSLRALVKYLDNMSEDEILELNIPTGVPLVYEFDENFKPIKHYYLGNADEIAAKAAAVANQGKAK.

Residues 10–17 (RHGESQWN), 23–24 (TG), R62, 89–92 (ERHY), K100, 116–117 (RR), and 185–186 (GN) contribute to the substrate site. Residue H11 is the Tele-phosphohistidine intermediate of the active site. Catalysis depends on E89, which acts as the Proton donor/acceptor.

The protein belongs to the phosphoglycerate mutase family. BPG-dependent PGAM subfamily. Homodimer.

It carries out the reaction (2R)-2-phosphoglycerate = (2R)-3-phosphoglycerate. Its pathway is carbohydrate degradation; glycolysis; pyruvate from D-glyceraldehyde 3-phosphate: step 3/5. Catalyzes the interconversion of 2-phosphoglycerate and 3-phosphoglycerate. This is 2,3-bisphosphoglycerate-dependent phosphoglycerate mutase from Salmonella dublin (strain CT_02021853).